Consider the following 520-residue polypeptide: Peptide chain release factor 3 (520 aa).

Positions 8 to 277 (ESRKTFAIIS…HAPMPNARQT (270 aa)) constitute a tr-type G domain. GTP contacts are provided by residues 17–24 (SHPDAGKT), 85–89 (DTPGH), and 139–142 (NKLD).

Belongs to the TRAFAC class translation factor GTPase superfamily. Classic translation factor GTPase family. PrfC subfamily.

Its subcellular location is the cytoplasm. In terms of biological role, increases the formation of ribosomal termination complexes and stimulates activities of RF-1 and RF-2. It binds guanine nucleotides and has strong preference for UGA stop codons. It may interact directly with the ribosome. The stimulation of RF-1 and RF-2 is significantly reduced by GTP and GDP, but not by GMP. This is Peptide chain release factor 3 from Staphylococcus haemolyticus (strain JCSC1435).